The following is a 1063-amino-acid chain: Cellulose synthase A catalytic subunit 7 [UDP-forming] (1063 aa).

Residues 1–213 are Cytoplasmic-facing; sequence MDTASVTGGE…IPSSKINPYR (213 aa). Zn(2+) is bound by residues Cys-18, Cys-21, Cys-37, Cys-40, Cys-45, Cys-48, Cys-60, and Cys-63. The segment at 18–64 adopts an RING-type; degenerate zinc-finger fold; it reads CRVCGEEVAAREDGKPFVACAECGFPVCKPCYEYERSEGTQCCPQCN. The tract at residues 116–154 is disordered; that stretch reads NGEQPAQKWRPGGPALSSFTGSVAGKDLEQEREMEGGME. The span at 141 to 154 shows a compositional bias: basic and acidic residues; sequence KDLEQEREMEGGME. The chain crosses the membrane as a helical span at residues 214 to 234; it reads IVIVLRLVVLCFFLKFRITTP. The Extracellular segment spans residues 235–237; the sequence is AMD. A helical transmembrane segment spans residues 238–258; that stretch reads AVPLWLASVICELWFALSWIL. The Cytoplasmic segment spans residues 259–845; that stretch reads DQLPKWSPVT…TNTIVYPFTS (587 aa). UDP-alpha-D-glucose contacts are provided by Ser-297, Lys-303, Glu-304, and Asp-333. Asp-333 is a catalytic residue. A coiled-coil region spans residues 387–414; the sequence is VKERRAMKREYEEFKVRINALVAKAQKK. Residue Lys-474 participates in UDP-alpha-D-glucose binding. Residues Lys-475 and Asp-499 each coordinate Mn(2+). Residue Asp-762 is part of the active site. Residues 846–866 traverse the membrane as a helical segment; that stretch reads IPLLAYCTIPAVCLLTGKFII. Residues 867–871 lie on the Extracellular side of the membrane; sequence PTLNN. A helical transmembrane segment spans residues 872–892; it reads LASIWFIALFLSIIATGVLEL. The Cytoplasmic portion of the chain corresponds to 893 to 907; sequence RWSGVSIEDWWRNEQ. Residues 908–928 traverse the membrane as a helical segment; sequence FWVIGGVSAHLFAVFQGLLKV. Topologically, residues 929–959 are extracellular; that stretch reads LGGVDTNFTVTSKAAADETDAFGELYLFKWT. N-linked (GlcNAc...) asparagine glycosylation is present at Asn-935. A helical transmembrane segment spans residues 960–980; sequence TLLVPPTTLIIINMVGIVAGV. Over 981-991 the chain is Cytoplasmic; sequence SDAVNNGYGSW. The chain crosses the membrane as a helical span at residues 992–1012; sequence GPLFGKLFFSFWVILHLYPFL. Residues 1013–1021 lie on the Extracellular side of the membrane; that stretch reads KGLMGRQNR. A helical membrane pass occupies residues 1022–1042; the sequence is TPTIVVLWSILLASIFSLVWV. The Cytoplasmic segment spans residues 1043–1063; the sequence is RIDPFIPKPKGPVLKPCGVSC.

The protein belongs to the glycosyltransferase 2 family. Plant cellulose synthase subfamily. The cofactor is Mn(2+). Zn(2+) is required as a cofactor.

It localises to the cell membrane. The enzyme catalyses [(1-&gt;4)-beta-D-glucosyl](n) + UDP-alpha-D-glucose = [(1-&gt;4)-beta-D-glucosyl](n+1) + UDP + H(+). The protein operates within glycan metabolism; plant cellulose biosynthesis. Its function is as follows. Catalytic subunit of cellulose synthase terminal complexes ('rosettes'), required for beta-1,4-glucan microfibril crystallization, a major mechanism of the cell wall formation. Involved in the secondary cell wall formation. The polypeptide is Cellulose synthase A catalytic subunit 7 [UDP-forming] (CESA7) (Oryza sativa subsp. japonica (Rice)).